The primary structure comprises 179 residues: MTAEAAGRYATALFELAKSEGAAEAVEADLAALRAMLTESPELADALASPLHAVEVKAGILSALAKKAKFNVLTANAFGVAARNGRAGDLGDLARVYAALAAADRGVVTADVQTAAALTKKQTEALAASLKSAFGREIEVRTEVRPELMGGLIVKVGSRMFDSSLRSKLDGMKTAMKEA.

Belongs to the ATPase delta chain family. In terms of assembly, F-type ATPases have 2 components, F(1) - the catalytic core - and F(0) - the membrane proton channel. F(1) has five subunits: alpha(3), beta(3), gamma(1), delta(1), epsilon(1). F(0) has three main subunits: a(1), b(2) and c(10-14). The alpha and beta chains form an alternating ring which encloses part of the gamma chain. F(1) is attached to F(0) by a central stalk formed by the gamma and epsilon chains, while a peripheral stalk is formed by the delta and b chains.

Its subcellular location is the cell inner membrane. Its function is as follows. F(1)F(0) ATP synthase produces ATP from ADP in the presence of a proton or sodium gradient. F-type ATPases consist of two structural domains, F(1) containing the extramembraneous catalytic core and F(0) containing the membrane proton channel, linked together by a central stalk and a peripheral stalk. During catalysis, ATP synthesis in the catalytic domain of F(1) is coupled via a rotary mechanism of the central stalk subunits to proton translocation. Functionally, this protein is part of the stalk that links CF(0) to CF(1). It either transmits conformational changes from CF(0) to CF(1) or is implicated in proton conduction. This is ATP synthase subunit delta from Maricaulis maris (strain MCS10) (Caulobacter maris).